The primary structure comprises 284 residues: Putative ABC transporter ATP-binding protein sll0385 (284 aa).

In terms of domain architecture, ABC transporter spans 51 to 278; sequence IRVRELSFAY…QTLMESHGLE (228 aa). 84–91 lines the ATP pocket; sequence GHNGCGKT.

Belongs to the ABC transporter superfamily.

It localises to the cell inner membrane. Its function is as follows. Probably part of an ABC transporter complex. Responsible for energy coupling to the transport system. This is Putative ABC transporter ATP-binding protein sll0385 from Synechocystis sp. (strain ATCC 27184 / PCC 6803 / Kazusa).